The primary structure comprises 285 residues: Protein FD (285 aa).

Basic residues predominate over residues 1–12 (MLSSAKHQRNHR). Disordered regions lie at residues 1–59 (MLSS…QKRS), 79–107 (NRHS…NSIF), 115–134 (LNQE…NGDS), 198–236 (SSSF…ARKQ), and 257–285 (KRQQ…TAPF). Residues 13–25 (LSATNKNQTLTKV) show a composition bias toward polar residues. Residues 26–50 (SSISSSSPSSSSSSSSTSSSSPLPS) show a composition bias toward low complexity. Polar residues predominate over residues 98–107 (HHNQNPNSIF). The bZIP domain occupies 214-277 (GNRRHKRMIK…AIQQPKKNTL (64 aa)). Positions 216 to 235 (RRHKRMIKNRESAARSRARK) are basic motif. A leucine-zipper region spans residues 242-263 (LELEVAHLQAENARLKRQQDQL). Residues 272–285 (PKKNTLQRSSTAPF) are compositionally biased toward polar residues. Position 282 is a phosphothreonine (threonine 282).

This sequence belongs to the bZIP family. As to quaternary structure, self-interacts. Interacts with FT and FDP/BZIP27. Interacts with GRF3 and GRF4, and in a calcium-independent manner, with CPK6 and CPK33. Post-translationally, phosphorylated at Thr-282 in a calcium-dependent manner by CPK6 and CPK33. As to expression, highly expressed in shoot apex.

Its subcellular location is the nucleus. Functionally, transcription factor required for the transition to flowering promoted by FT. This chain is Protein FD, found in Arabidopsis thaliana (Mouse-ear cress).